Consider the following 98-residue polypeptide: NADH-ubiquinone oxidoreductase chain 4L (98 aa).

3 helical membrane passes run 1–21, 27–47, and 61–81; these read MYSS…VNLI, FLMT…FVPI, and VILL…MVLM.

The protein belongs to the complex I subunit 4L family.

Its subcellular location is the mitochondrion membrane. The catalysed reaction is a ubiquinone + NADH + 5 H(+)(in) = a ubiquinol + NAD(+) + 4 H(+)(out). Core subunit of the mitochondrial membrane respiratory chain NADH dehydrogenase (Complex I) that is believed to belong to the minimal assembly required for catalysis. Complex I functions in the transfer of electrons from NADH to the respiratory chain. The immediate electron acceptor for the enzyme is believed to be ubiquinone. This is NADH-ubiquinone oxidoreductase chain 4L (ND4L) from Lumbricus terrestris (Common earthworm).